A 397-amino-acid polypeptide reads, in one-letter code: Elongation factor Tu (397 aa).

One can recognise a tr-type G domain in the interval 10–207 (KPHVNIGTIG…AVDESIPDPV (198 aa)). Residues 19-26 (GHVDHGKT) are G1. Position 19–26 (19–26 (GHVDHGKT)) interacts with GTP. Residue Thr26 participates in Mg(2+) binding. The segment at 63-67 (GITIN) is G2. Residues 84-87 (DAPG) are G3. Residues 84 to 88 (DAPGH) and 139 to 142 (NKAD) contribute to the GTP site. The G4 stretch occupies residues 139-142 (NKAD). A G5 region spans residues 177–179 (SGL).

The protein belongs to the TRAFAC class translation factor GTPase superfamily. Classic translation factor GTPase family. EF-Tu/EF-1A subfamily. As to quaternary structure, monomer.

Its subcellular location is the cytoplasm. The enzyme catalyses GTP + H2O = GDP + phosphate + H(+). Its function is as follows. GTP hydrolase that promotes the GTP-dependent binding of aminoacyl-tRNA to the A-site of ribosomes during protein biosynthesis. The protein is Elongation factor Tu of Tropheryma whipplei (strain Twist) (Whipple's bacillus).